The primary structure comprises 149 residues: UPF0178 protein CPF_2548 (149 aa).

Belongs to the UPF0178 family.

The chain is UPF0178 protein CPF_2548 from Clostridium perfringens (strain ATCC 13124 / DSM 756 / JCM 1290 / NCIMB 6125 / NCTC 8237 / Type A).